We begin with the raw amino-acid sequence, 233 residues long: Preflagellin peptidase (233 aa).

Met-1 is a topological domain (cytoplasmic). The helical transmembrane segment at Ile-2–Asp-18 threads the bilayer. The Extracellular portion of the chain corresponds to Ile-19 to Glu-23. Residues Ile-24–Thr-46 traverse the membrane as a helical segment. Topologically, residues Thr-47–Asn-49 are cytoplasmic. A helical membrane pass occupies residues Phe-50–Val-72. Over Leu-73–Ala-78 the chain is Extracellular. Residues Asp-79–Leu-89 traverse the membrane as a helical segment. Residues Ile-90–Ile-110 lie on the Cytoplasmic side of the membrane. A helical membrane pass occupies residues Pro-111–Asn-139. Over Gly-140–Pro-207 the chain is Extracellular. Residues Leu-208–Thr-219 traverse the membrane as a helical segment. The Cytoplasmic segment spans residues Pro-220 to Met-233.

This sequence belongs to the peptidase A24 family. Archaeal preflagellin peptidase subfamily.

It is found in the cell membrane. It carries out the reaction Cleaves the signal peptide of 3 to 12 amino acids from the N-terminal of preflagellin, usually at Arg-Gly-|- or Lys-Gly-|-, to release flagellin.. Functionally, cleaves the N-terminal leader peptide from preflagellins. The processing of preflagellins is necessary for assembly of flagellins into a flagellum structure. This is Preflagellin peptidase (flaK) from Methanococcus voltae.